The following is a 625-amino-acid chain: SLTGVFPSGLIETKVSAAKITENYQFDSRIRLNSIGFIPNHSKKATIAANCSTFYVVKEDGTIVYTGTATSMFDNDTKETVYIADFSSVNEEGTYYLAVPGVGKSVNFKIAMNVYEDAFKTAMLGMYLLRCGTSVSATYNGIHYSHGPCHTNDAYLDYINGQHTKKDSTKGWHDAGDYNKYVVNAGITVGSMFLAWEHFKDQLEPVALEIPEKNNSIPDFLDELKYEIDWILTMQYPDGSGRVAHKVSTRNFGGFIMPENEHDERFFVPWSSAATADFVAMTAMAARIFRPYDPQYAEKCINAAKVSYEFLKNNPANVFANQSGFSTGEYATVSDADDRLWAAAEMWETLGDEEYLRDFENRAAQFSKKIEADFDWDNVANLGMFTYLLSERPGKNPALVQSIKDSLLSTADSIVRTSQNHGYGRTLGTTYYWGCNGTVVRQTMILQVANKISPNNDYVNAALDAISHVFGRNYYNRSYVTGLGINPPMNPHDRRSGADGIWEPWPGYLVGGGWPGPKDWVDIQDSYQTNEIAINWNAALIYALAGFVNYNSPQNEVLYGDVNDDGKVNSTDLTLLKRYVLKAVSTLPSSKAEKNADVNRDGRVNSSDVTILSRYLIRVIEKLPI.

The first 17 residues, 1–17 (SLTGVFPSGLIETKVSA), serve as a signal peptide directing secretion. The active-site Nucleophile is Asp-177. Residues His-492 and Asp-522 contribute to the active site. Glu-531 acts as the Proton donor in catalysis. The Dockerin domain occupies 555 to 625 (NEVLYGDVND…LIRVIEKLPI (71 aa)).

This sequence belongs to the glycosyl hydrolase 9 (cellulase E) family. Requires Ca(2+) as cofactor.

The catalysed reaction is Endohydrolysis of (1-&gt;4)-beta-D-glucosidic linkages in cellulose, lichenin and cereal beta-D-glucans.. Functionally, this enzyme catalyzes the endohydrolysis of 1,4-beta-glucosidic linkages in cellulose, lichenin and cereal beta-D-glucans. This is Endoglucanase D (celD) from Acetivibrio thermocellus (Hungateiclostridium thermocellum).